We begin with the raw amino-acid sequence, 424 residues long: Chloroquine resistance transporter (424 aa).

At 1 to 58 (MKFASKKNNQKNSSKNDERYRELDNLVQEGNGSRLGGGSCLGKCAHVFKLIFKEIKDN) the chain is on the cytoplasmic side. A helical transmembrane segment spans residues 59–79 (IFIYILSIIYLSVCVMNKIFA). Topologically, residues 80-90 (KRTLNKIGNYS) are vacuolar. Residue Asn88 is glycosylated (N-linked (GlcNAc...) asparagine). The chain crosses the membrane as a helical span at residues 91-111 (FVTSETHNFICMIMFFIVYSL). The Cytoplasmic segment spans residues 112-127 (FGNKKGNSKERHRSFN). The chain crosses the membrane as a helical span at residues 128-148 (LQFFAISMLDACSVILAFIGL). Residues 149 to 154 (TRTTGN) lie on the Vacuolar side of the membrane. Residues 155–175 (IQSFVLQLSIPINMFFCFLIL) form a helical membrane-spanning segment. Over 176 to 178 (RYR) the chain is Cytoplasmic. Residues 179-199 (YHLYNYLGAVIIVVTIALVEM) traverse the membrane as a helical segment. Residues 200–209 (KLSFETQEEN) lie on the Vacuolar side of the membrane. Residues 210–230 (SIIFNLVLISALIPVCFSNMT) form a helical membrane-spanning segment. Residues 231–248 (REIVFKKYKIDILRLNAM) lie on the Cytoplasmic side of the membrane. The chain crosses the membrane as a helical span at residues 249–269 (VSFFQLFTSCLILPVYTLPFL). Over 270 to 317 (KQLHLPYNEIWTNIKNGFACLFLGRNTVVENCGLGMAKLCDDCDGAWK) the chain is Vacuolar. Disulfide bonds link Cys289/Cys312 and Cys301/Cys309. A helical transmembrane segment spans residues 318–338 (TFALFSFFNICDNLITSYIID). The Cytoplasmic segment spans residues 339-346 (KFSTMTYT). Residues 347–367 (IVSCIQGPAIAIAYYFKFLAG) traverse the membrane as a helical segment. At 368–377 (DVVREPRLLD) the chain is on the vacuolar side. Residues 378 to 398 (FVTLFGYLFGSIIYRVGNIIL) traverse the membrane as a helical segment. The Cytoplasmic portion of the chain corresponds to 399-424 (ERKKMRNEENEDSEGELTNVDSIITQ).

Belongs to the CRT-like transporter family. In terms of assembly, monomer.

The protein resides in the vacuole membrane. The catalysed reaction is L-arginine(in) = L-arginine(out). The enzyme catalyses L-lysine(in) = L-lysine(out). It carries out the reaction L-histidine(out) = L-histidine(in). It catalyses the reaction histamine(out) = histamine(in). The catalysed reaction is spermidine(in) = spermidine(out). The enzyme catalyses Fe(3+)(in) = Fe(3+)(out). It carries out the reaction Fe(2+)(in) = Fe(2+)(out). With respect to regulation, transporter activity is trans-stimulated by host-derived peptides containing 4-11 amino acids. Trans-stimulation by hemoglobin-derived peptide VDPVNF is pH-dependent and sodium-independent. Saquinavir trans-stimulates transport of hemoglobin-derived peptide VDPVNF. Protons are non-competitive inhibitors of chloroquine transport. Functionally, nutrient transporter. Substrate transport is pH-dependent. Can transport arginine, lysine, histidine, peptides, histamine and spermidine. May modulate activity of endogenous transporters. Involved in maintaining the osmotic homeostasis of the digestive vacuole. Required for the asexual intraerythrocytic proliferation of parasites. Can transport Fe(2+) and Fe(3+). The sequence is that of Chloroquine resistance transporter from Plasmodium falciparum.